A 507-amino-acid chain; its full sequence is Maturase K (507 aa).

It belongs to the intron maturase 2 family. MatK subfamily.

It is found in the plastid. It localises to the chloroplast. Usually encoded in the trnK tRNA gene intron. Probably assists in splicing its own and other chloroplast group II introns. This Buxus microphylla (Littleleaf boxwood) protein is Maturase K.